Reading from the N-terminus, the 40-residue chain is Ribosome-inactivating protein saporin-1 (40 aa).

It belongs to the ribosome-inactivating protein family. Type 1 RIP subfamily.

The enzyme catalyses Endohydrolysis of the N-glycosidic bond at one specific adenosine on the 28S rRNA.. Its function is as follows. Ribosome-inactivating protein of type 1, inhibits protein synthesis in animal cells. This Saponaria officinalis (Common soapwort) protein is Ribosome-inactivating protein saporin-1 (SAP1).